A 329-amino-acid chain; its full sequence is Transmembrane protein I329L (329 aa).

The first 31 residues, 1–31 (MLRVFIFFVFLGSGLAGKVKSPITCKYFISK), serve as a signal peptide directing secretion. Asparagine 32, asparagine 39, asparagine 44, asparagine 58, asparagine 76, asparagine 82, asparagine 101, asparagine 185, and asparagine 219 each carry an N-linked (GlcNAc...) asparagine; by host glycan. Over 32-239 (NNTWYKYNVT…NTERYKNCYP (208 aa)) the chain is Extracellular. Residues 240-260 (FVLVSIICSCISSLFLLICLL) traverse the membrane as a helical segment. Residues 261 to 329 (RTICKKYSCT…EKKVSCSRRK (69 aa)) are Cytoplasmic-facing.

The protein belongs to the asfivirus I329L family. Highly glycosylated.

The protein localises to the host endoplasmic reticulum membrane. Its subcellular location is the host Golgi apparatus membrane. In terms of biological role, viral TLR3 homolog that probably prevents TLR3 dimerization and subsequent induction of IFN. Inhibits dsRNA-stimulated activation of NF-kB and IRF3. This chain is Transmembrane protein I329L, found in Ornithodoros (relapsing fever ticks).